The chain runs to 241 residues: General transcription factor IIF subunit 2 (241 aa).

It belongs to the TFIIF beta subunit family. As to quaternary structure, heterodimer of an alpha and a beta subunit.

It is found in the nucleus. Functionally, TFIIF is a general transcription initiation factor that binds to RNA polymerase II and helps to recruit it to the initiation complex in collaboration with TFIIB. The chain is General transcription factor IIF subunit 2 (gtf2f2) from Dictyostelium discoideum (Social amoeba).